A 105-amino-acid chain; its full sequence is TPR repeat-containing protein PA0015 (105 aa).

TPR repeat units follow at residues 17 to 50 and 52 to 84; these read ALLR…DPKY and AGWK…AATH.

The sequence is that of TPR repeat-containing protein PA0015 from Pseudomonas aeruginosa (strain ATCC 15692 / DSM 22644 / CIP 104116 / JCM 14847 / LMG 12228 / 1C / PRS 101 / PAO1).